We begin with the raw amino-acid sequence, 116 residues long: Large ribosomal subunit protein bL19 (116 aa).

Belongs to the bacterial ribosomal protein bL19 family.

Functionally, this protein is located at the 30S-50S ribosomal subunit interface and may play a role in the structure and function of the aminoacyl-tRNA binding site. The sequence is that of Large ribosomal subunit protein bL19 from Streptomyces griseus subsp. griseus (strain JCM 4626 / CBS 651.72 / NBRC 13350 / KCC S-0626 / ISP 5235).